The chain runs to 389 residues: Trans-2-enoyl-CoA reductase [NADH] (389 aa).

NAD(+)-binding positions include 47-52, 73-74, 110-111, and 138-139; these read GASTGY, FE, DA, and LA. Residue tyrosine 224 participates in substrate binding. Tyrosine 234 acts as the Proton donor in catalysis. Residues lysine 243 and 272 to 274 contribute to the NAD(+) site; that span reads LVT.

This sequence belongs to the TER reductase family. As to quaternary structure, monomer.

The catalysed reaction is a 2,3-saturated acyl-CoA + NAD(+) = a (2E)-enoyl-CoA + NADH + H(+). Its pathway is lipid metabolism; fatty acid biosynthesis. Involved in the fatty acid synthesis (FAS II). Catalyzes the reduction of a carbon-carbon double bond in an enoyl moiety that is covalently linked to a coenzyme A (CoA). The protein is Trans-2-enoyl-CoA reductase [NADH] of Clostridium perfringens (strain 13 / Type A).